Reading from the N-terminus, the 628-residue chain is tRNA uridine 5-carboxymethylaminomethyl modification enzyme MnmG (628 aa).

Residues 11 to 16, valine 123, and serine 178 each bind FAD; that span reads GAGHAG. 271-285 is a binding site for NAD(+); the sequence is GPRYCPSIETKIVTF. An FAD-binding site is contributed by glutamine 368.

It belongs to the MnmG family. In terms of assembly, homodimer. Heterotetramer of two MnmE and two MnmG subunits. FAD is required as a cofactor.

The protein resides in the cytoplasm. Functionally, NAD-binding protein involved in the addition of a carboxymethylaminomethyl (cmnm) group at the wobble position (U34) of certain tRNAs, forming tRNA-cmnm(5)s(2)U34. The polypeptide is tRNA uridine 5-carboxymethylaminomethyl modification enzyme MnmG (Bacteroides thetaiotaomicron (strain ATCC 29148 / DSM 2079 / JCM 5827 / CCUG 10774 / NCTC 10582 / VPI-5482 / E50)).